The primary structure comprises 130 residues: Small ribosomal subunit protein uS9 (130 aa).

The protein belongs to the universal ribosomal protein uS9 family.

The protein is Small ribosomal subunit protein uS9 of Yersinia pseudotuberculosis serotype O:1b (strain IP 31758).